A 324-amino-acid polypeptide reads, in one-letter code: ATP synthase subunit a 2 (324 aa).

A signal peptide spans 1-33 (MKRVNVFRSGVFSRLFALLLPFLLGINGLVYAS). Transmembrane regions (helical) follow at residues 95-115 (HVVM…LVGN), 157-177 (LPYL…GLVP), 179-199 (GATA…TFFI), 224-244 (ALWI…PFAL), 257-277 (IVIL…VAMF), and 291-311 (IFVA…FIGL).

The protein belongs to the ATPase A chain family. F-type ATPases have 2 components, CF(1) - the catalytic core - and CF(0) - the membrane proton channel. CF(1) has five subunits: alpha(3), beta(3), gamma(1), delta(1), epsilon(1). CF(0) has four main subunits: a, b, b' and c.

It localises to the cell inner membrane. Its function is as follows. Key component of the proton channel; it plays a direct role in the translocation of protons across the membrane. The protein is ATP synthase subunit a 2 of Prosthecochloris aestuarii (strain DSM 271 / SK 413).